Reading from the N-terminus, the 712-residue chain is Amino-acid acetyltransferase, mitochondrial (712 aa).

A mitochondrion-targeting transit peptide spans Met1–Thr47. A disordered region spans residues Phe55–Asp99. The span at Lys63–Gln74 shows a compositional bias: basic and acidic residues. Residues Pro81–Glu93 show a composition bias toward low complexity. The N-acetyltransferase domain occupies Gly534–Pro702.

This sequence belongs to the acetyltransferase family.

The protein localises to the mitochondrion. It catalyses the reaction L-glutamate + acetyl-CoA = N-acetyl-L-glutamate + CoA + H(+). It participates in amino-acid biosynthesis; L-arginine biosynthesis; N(2)-acetyl-L-ornithine from L-glutamate: step 1/4. With respect to regulation, inhibited by arginine. Functionally, N-acetylglutamate synthase involved in arginine biosynthesis. The sequence is that of Amino-acid acetyltransferase, mitochondrial (arg-14) from Neurospora crassa (strain ATCC 24698 / 74-OR23-1A / CBS 708.71 / DSM 1257 / FGSC 987).